The primary structure comprises 331 residues: MSDQSSEPLDSSLRQAVVPDSAAGRRFDAVLAELFPEFSRSRLSEWIKSGDALLDGETARPRDTLRGGETVQVQVVLETQTHAAPQDIPLNVLYEDDHVLVIDKPAGLVVHPGAGNPDGTLVNALLFRDPNLAAVPRAGVVHRLDKDTSGVMVVARTLQAQTALVEQLSARDVHRQYLAVVVGALVSGGTADAPIDRHPRDRLKMAVRDDGRDAVTHYRLRERFRAHTALECRLETGRTHQIRVHMAHLKSPIVGDPLYGGALKLPKGATDTLVAELRGFKRQALHAETLEFLHPVSGEPIRASAPVPEDLQRLMSALREDSARAAELARR.

Positions 25–97 (RRFDAVLAEL…IPLNVLYEDD (73 aa)) constitute an S4 RNA-binding domain. The active site involves D145.

Belongs to the pseudouridine synthase RluA family.

The protein resides in the cytoplasm. It catalyses the reaction uridine(1911/1915/1917) in 23S rRNA = pseudouridine(1911/1915/1917) in 23S rRNA. Its function is as follows. Responsible for synthesis of pseudouridine from uracil at positions 1911, 1915 and 1917 in 23S ribosomal RNA. The sequence is that of Ribosomal large subunit pseudouridine synthase D (rluD) from Xanthomonas campestris pv. campestris (strain ATCC 33913 / DSM 3586 / NCPPB 528 / LMG 568 / P 25).